Reading from the N-terminus, the 156-residue chain is Endogenous retrovirus group K member 7 Pro protein (156 aa).

The Peptidase A2 domain maps to Phe-21 to Leu-96. Asp-26 is a catalytic residue. The G-patch domain maps to Tyr-111 to Phe-156.

Belongs to the peptidase A2 family. HERV class-II K(HML-2) subfamily. In terms of assembly, active as a homodimer. Post-translationally, autoproteolytically processed at the N-terminus. Expected C-terminal autoprocessing not detected. The sequence shown is that of the processed Pro protein.

It carries out the reaction Processing at the authentic HIV-1 PR recognition site and release of the mature p17 matrix and the p24 capsid protein, as a result of the cleavage of the -SQNY-|-PIVQ- cleavage site.. Its function is as follows. Retroviral proteases have roles in processing of the primary translation products and the maturation of the viral particle. Endogenous Pro proteins may have kept, lost or modified their original function during evolution. This endogenous protein has retained most of the characteristics of retroviral proteases. This Homo sapiens (Human) protein is Endogenous retrovirus group K member 7 Pro protein (ERVK-7).